A 698-amino-acid chain; its full sequence is Inner centromere protein SLI15 (698 aa).

Position 268 is a phosphoserine (Ser-268). Disordered regions lie at residues 365–390 (KNKI…FDKT), 405–444 (EQKK…EVKN), and 455–474 (RPTK…TSQT). Composition is skewed to polar residues over residues 422 to 439 (RPHS…SSPS) and 459 to 474 (ASIS…TSQT). At Ser-489 the chain carries Phosphoserine. The interval 535 to 560 (IMRSQQEHHRRKQEKQKRMSHLEQDL) is disordered. The span at 550–560 (QKRMSHLEQDL) shows a compositional bias: basic and acidic residues.

The protein belongs to the INCENP family. As to quaternary structure, component of the CPC complex at least composed of IPL1, BIR1 and SLI15. Post-translationally, phosphorylated by serine/threonine protein kinase IPL1.

The protein localises to the nucleus. It localises to the cytoplasm. It is found in the cytoskeleton. The protein resides in the spindle. Its subcellular location is the chromosome. The protein localises to the centromere. It localises to the kinetochore. Component of the chromosomal passenger complex (CPC), a complex that acts as a key regulator of mitosis. Stimulates IPL1 kinase activity and facilitates its association with the mitotic spindle. Has a role in attaching the kinetochores to the microtubules and ensuring that sister kinetochores connect to opposite poles. This chain is Inner centromere protein SLI15 (SLI15), found in Saccharomyces cerevisiae (strain ATCC 204508 / S288c) (Baker's yeast).